A 418-amino-acid polypeptide reads, in one-letter code: Gamma-glutamyl phosphate reductase (418 aa).

This sequence belongs to the gamma-glutamyl phosphate reductase family.

It is found in the cytoplasm. It carries out the reaction L-glutamate 5-semialdehyde + phosphate + NADP(+) = L-glutamyl 5-phosphate + NADPH + H(+). It participates in amino-acid biosynthesis; L-proline biosynthesis; L-glutamate 5-semialdehyde from L-glutamate: step 2/2. Functionally, catalyzes the NADPH-dependent reduction of L-glutamate 5-phosphate into L-glutamate 5-semialdehyde and phosphate. The product spontaneously undergoes cyclization to form 1-pyrroline-5-carboxylate. This is Gamma-glutamyl phosphate reductase from Moorella thermoacetica (strain ATCC 39073 / JCM 9320).